The primary structure comprises 126 residues: MDMKHTLLEALGIEIVENTAERCVAVMPVDHRTVQPFGYLHGGASVALAETAASAGAQNLIDHTTQACVGLEINANHLKSVKEGTVKAIAEPVHIGRTTIVYHIHIYDEQERLICISRCTLAVIKK.

Belongs to the thioesterase PaaI family.

Its function is as follows. Is not required for competence. In Bacillus subtilis (strain 168), this protein is Putative esterase ComA2 (yuxO).